Reading from the N-terminus, the 173-residue chain is Flavodoxin 2 (173 aa).

Residues 3-165 form the Flavodoxin-like domain; it reads MGLFYGSSTC…RIQTWCEQIL (163 aa).

The protein belongs to the flavodoxin family. FMN serves as cofactor.

Functionally, low-potential electron donor to a number of redox enzymes. The chain is Flavodoxin 2 (fldB) from Salmonella typhi.